The following is a 742-amino-acid chain: Phosphoribosylformylglycinamidine synthase subunit PurL (742 aa).

The active site involves His-54. Residues Tyr-57 and Lys-96 each coordinate ATP. Glu-98 lines the Mg(2+) pocket. Substrate contacts are provided by residues 99 to 102 (SHNH) and Arg-121. His-100 acts as the Proton acceptor in catalysis. Asp-122 is a binding site for Mg(2+). Gln-245 is a substrate binding site. Asp-273 provides a ligand contact to Mg(2+). Residue 317–319 (ESQ) coordinates substrate. ATP contacts are provided by Asp-500 and Gly-537. Residue Asn-538 participates in Mg(2+) binding. Ser-540 contributes to the substrate binding site.

It belongs to the FGAMS family. As to quaternary structure, monomer. Part of the FGAM synthase complex composed of 1 PurL, 1 PurQ and 2 PurS subunits.

It is found in the cytoplasm. It catalyses the reaction N(2)-formyl-N(1)-(5-phospho-beta-D-ribosyl)glycinamide + L-glutamine + ATP + H2O = 2-formamido-N(1)-(5-O-phospho-beta-D-ribosyl)acetamidine + L-glutamate + ADP + phosphate + H(+). The protein operates within purine metabolism; IMP biosynthesis via de novo pathway; 5-amino-1-(5-phospho-D-ribosyl)imidazole from N(2)-formyl-N(1)-(5-phospho-D-ribosyl)glycinamide: step 1/2. In terms of biological role, part of the phosphoribosylformylglycinamidine synthase complex involved in the purines biosynthetic pathway. Catalyzes the ATP-dependent conversion of formylglycinamide ribonucleotide (FGAR) and glutamine to yield formylglycinamidine ribonucleotide (FGAM) and glutamate. The FGAM synthase complex is composed of three subunits. PurQ produces an ammonia molecule by converting glutamine to glutamate. PurL transfers the ammonia molecule to FGAR to form FGAM in an ATP-dependent manner. PurS interacts with PurQ and PurL and is thought to assist in the transfer of the ammonia molecule from PurQ to PurL. This chain is Phosphoribosylformylglycinamidine synthase subunit PurL, found in Geobacillus thermodenitrificans (strain NG80-2).